A 446-amino-acid chain; its full sequence is N-succinylarginine dihydrolase (446 aa).

Residues 21 to 30, N112, and 139 to 140 contribute to the substrate site; these read AGLSWGNVAS and HR. The active site involves E176. Substrate is bound at residue R216. Residue H252 is part of the active site. Substrate-binding residues include D254 and N364. The Nucleophile role is filled by C370.

This sequence belongs to the succinylarginine dihydrolase family. Homodimer.

It catalyses the reaction N(2)-succinyl-L-arginine + 2 H2O + 2 H(+) = N(2)-succinyl-L-ornithine + 2 NH4(+) + CO2. Its pathway is amino-acid degradation; L-arginine degradation via AST pathway; L-glutamate and succinate from L-arginine: step 2/5. In terms of biological role, catalyzes the hydrolysis of N(2)-succinylarginine into N(2)-succinylornithine, ammonia and CO(2). This chain is N-succinylarginine dihydrolase, found in Marinobacter nauticus (strain ATCC 700491 / DSM 11845 / VT8) (Marinobacter aquaeolei).